Here is a 324-residue protein sequence, read N- to C-terminus: UDP-N-acetylenolpyruvoylglucosamine reductase (324 aa).

One can recognise an FAD-binding PCMH-type domain in the interval Ala38–Gln217. The active site involves Arg183. The active-site Proton donor is the Ser232. Glu302 is a catalytic residue.

It belongs to the MurB family. FAD is required as a cofactor.

The protein localises to the cytoplasm. It carries out the reaction UDP-N-acetyl-alpha-D-muramate + NADP(+) = UDP-N-acetyl-3-O-(1-carboxyvinyl)-alpha-D-glucosamine + NADPH + H(+). It participates in cell wall biogenesis; peptidoglycan biosynthesis. Its function is as follows. Cell wall formation. The protein is UDP-N-acetylenolpyruvoylglucosamine reductase of Allorhizobium ampelinum (strain ATCC BAA-846 / DSM 112012 / S4) (Agrobacterium vitis (strain S4)).